Consider the following 288-residue polypeptide: Energy-coupling factor transporter ATP-binding protein EcfA2 (288 aa).

Residues 2-244 form the ABC transporter domain; that stretch reads IKFEKVNYTY…VDFLKAHELG (243 aa). Residue 39-46 participates in ATP binding; that stretch reads GHTGSGKS.

It belongs to the ABC transporter superfamily. Energy-coupling factor EcfA family. In terms of assembly, forms a stable energy-coupling factor (ECF) transporter complex composed of 2 membrane-embedded substrate-binding proteins (S component), 2 ATP-binding proteins (A component) and 2 transmembrane proteins (T component).

The protein localises to the cell membrane. In terms of biological role, ATP-binding (A) component of a common energy-coupling factor (ECF) ABC-transporter complex. Unlike classic ABC transporters this ECF transporter provides the energy necessary to transport a number of different substrates. The polypeptide is Energy-coupling factor transporter ATP-binding protein EcfA2 (Lactococcus lactis subsp. lactis (strain IL1403) (Streptococcus lactis)).